Consider the following 124-residue polypeptide: Holo-[acyl-carrier-protein] synthase (124 aa).

Mg(2+)-binding residues include Asp8 and Glu55.

It belongs to the P-Pant transferase superfamily. AcpS family. Mg(2+) serves as cofactor.

The protein resides in the cytoplasm. The enzyme catalyses apo-[ACP] + CoA = holo-[ACP] + adenosine 3',5'-bisphosphate + H(+). In terms of biological role, transfers the 4'-phosphopantetheine moiety from coenzyme A to a Ser of acyl-carrier-protein. In Desulfovibrio desulfuricans (strain ATCC 27774 / DSM 6949 / MB), this protein is Holo-[acyl-carrier-protein] synthase.